The sequence spans 87 residues: Small ribosomal subunit protein uS15c (87 aa).

It belongs to the universal ribosomal protein uS15 family. As to quaternary structure, part of the 30S ribosomal subunit.

The protein resides in the plastid. It is found in the chloroplast. This is Small ribosomal subunit protein uS15c (rps15) from Solanum lycopersicum (Tomato).